The chain runs to 353 residues: Alanine racemase (353 aa).

Lysine 33 (proton acceptor; specific for D-alanine) is an active-site residue. Position 33 is an N6-(pyridoxal phosphate)lysine (lysine 33). Arginine 129 is a substrate binding site. Residue tyrosine 250 is the Proton acceptor; specific for L-alanine of the active site. Residue methionine 298 coordinates substrate.

Belongs to the alanine racemase family. Requires pyridoxal 5'-phosphate as cofactor.

It carries out the reaction L-alanine = D-alanine. It participates in amino-acid biosynthesis; D-alanine biosynthesis; D-alanine from L-alanine: step 1/1. In terms of biological role, catalyzes the interconversion of L-alanine and D-alanine. May also act on other amino acids. This Aromatoleum aromaticum (strain DSM 19018 / LMG 30748 / EbN1) (Azoarcus sp. (strain EbN1)) protein is Alanine racemase (alr).